Reading from the N-terminus, the 445-residue chain is Rab GDP dissociation inhibitor beta (445 aa).

Position 1 is an N-acetylmethionine (Met1). Lys57 carries the N6-succinyllysine modification. Lys112 carries the post-translational modification N6-acetyllysine. Ser130 carries the phosphoserine modification. Lys269 bears the N6-acetyllysine mark. Phosphoserine is present on Ser382.

The protein belongs to the Rab GDI family. In terms of assembly, interacts with RHOH. Interacts with the GDP-bound inactive forms of RAB3A, RAB3B, RAB3C, RAB5A, RAB5B, RAB5C, RAB8A, RAB8B, RAB10, RAB12, RAB35, and RAB43; binds RAB3D to a lesser extent. Interacts with DZIP1; this interaction negatively regulates the interaction of GDI2 with GDP-bound RAB8A. Ubiquitously expressed.

Its subcellular location is the cytoplasm. The protein localises to the membrane. It is found in the golgi apparatus. It localises to the trans-Golgi network. In terms of biological role, GDP-dissociation inhibitor preventing the GDP to GTP exchange of most Rab proteins. By keeping these small GTPases in their inactive GDP-bound form regulates intracellular membrane trafficking. Negatively regulates protein transport to the cilium and ciliogenesis through the inhibition of RAB8A. The protein is Rab GDP dissociation inhibitor beta (Gdi2) of Rattus norvegicus (Rat).